The following is a 108-amino-acid chain: C-C motif chemokine 19 (108 aa).

Residues 1–25 (MAPRVTPLLAFSLLVLWTFPAPTLG) form the signal peptide. 2 disulfides stabilise this stretch: Cys33–Cys59 and Cys34–Cys75. An N-linked (GlcNAc...) asparagine glycan is attached at Asn100.

This sequence belongs to the intercrine beta (chemokine CC) family. In terms of assembly, interacts with TNFAIP6 (via Link domain). As to expression, highly expressed by dendritic cells in mesenteric and peripheral lymph nodes. Significant expression in spleen (T cell zone or periarteriolar lymphatic sheath) and Peyer patches. Low expression in thymus.

The protein localises to the secreted. Strongly chemotactic for naive (L-selectinhi) CD4 T-cells and for CD8 T-cells and weakly attractive for resting B-cells and memory (L-selectinlo) CD4 T-cells. May play a role in promoting encounters between recirculating T-cells and dendritic cells and in the migration of activated B-cells into the T-zone of secondary lymphoid tissues. Binds to chemokine receptor CCR7. Binds to atypical chemokine receptor ACKR4 and mediates the recruitment of beta-arrestin (ARRB1/2) to ACKR4. This Mus musculus (Mouse) protein is C-C motif chemokine 19 (Ccl19).